Here is a 759-residue protein sequence, read N- to C-terminus: Polyribonucleotide nucleotidyltransferase (759 aa).

Mg(2+) is bound by residues aspartate 522 and aspartate 528. Positions 588–647 (PRITTIKVPVDKIGEVIGPKGKMINSITEETGASISIEDDGTVFVGASNGEAAQAAIDKI) constitute a KH domain. One can recognise an S1 motif domain in the interval 659–728 (GERFLGTVVK…NRGKISLVLV (70 aa)). A disordered region spans residues 734–759 (AEASDNGSATPSDKAPATADATTAGN). Over residues 741 to 759 (SATPSDKAPATADATTAGN) the composition is skewed to low complexity.

This sequence belongs to the polyribonucleotide nucleotidyltransferase family. Mg(2+) serves as cofactor.

The protein resides in the cytoplasm. It catalyses the reaction RNA(n+1) + phosphate = RNA(n) + a ribonucleoside 5'-diphosphate. In terms of biological role, involved in mRNA degradation. Catalyzes the phosphorolysis of single-stranded polyribonucleotides processively in the 3'- to 5'-direction. This is Polyribonucleotide nucleotidyltransferase from Mycobacterium sp. (strain JLS).